The chain runs to 155 residues: RNA pyrophosphohydrolase (155 aa).

The 143-residue stretch at 5 to 147 (KYRPNVAAII…KRQVYRQVIA (143 aa)) folds into the Nudix hydrolase domain. Positions 42–63 (GGIDEGETPLEALHRELLEEIG) match the Nudix box motif.

The protein belongs to the Nudix hydrolase family. RppH subfamily. It depends on a divalent metal cation as a cofactor.

Accelerates the degradation of transcripts by removing pyrophosphate from the 5'-end of triphosphorylated RNA, leading to a more labile monophosphorylated state that can stimulate subsequent ribonuclease cleavage. In Helicobacter pylori (strain HPAG1), this protein is RNA pyrophosphohydrolase.